A 166-amino-acid polypeptide reads, in one-letter code: 3-hydroxyacyl-[acyl-carrier-protein] dehydratase FabZ (166 aa).

His72 is an active-site residue.

The protein belongs to the thioester dehydratase family. FabZ subfamily.

It localises to the cytoplasm. The catalysed reaction is a (3R)-hydroxyacyl-[ACP] = a (2E)-enoyl-[ACP] + H2O. In terms of biological role, involved in unsaturated fatty acids biosynthesis. Catalyzes the dehydration of short chain beta-hydroxyacyl-ACPs and long chain saturated and unsaturated beta-hydroxyacyl-ACPs. The polypeptide is 3-hydroxyacyl-[acyl-carrier-protein] dehydratase FabZ (Synechococcus sp. (strain JA-2-3B'a(2-13)) (Cyanobacteria bacterium Yellowstone B-Prime)).